Reading from the N-terminus, the 83-residue chain is Mu-theraphotoxin-Hhn2b 1 (83 aa).

The first 21 residues, 1-21 (MKASMFLALAGLVLLFVVCYA), serve as a signal peptide directing secretion. A propeptide spanning residues 22–48 (SESEEKEFPRELISKIFAVDDFKGEER) is cleaved from the precursor. 3 disulfides stabilise this stretch: Cys50–Cys65, Cys57–Cys70, and Cys64–Cys77. The residue at position 81 (Leu81) is a Leucine amide.

This sequence belongs to the neurotoxin 10 (Hwtx-1) family. 14 (Hntx-1) subfamily. In terms of assembly, monomer. As to expression, expressed by the venom gland.

It localises to the secreted. In terms of biological role, weakly blocks the rat SCN2A/SCN1B (Nav1.2/beta-1) sodium channel (IC(50)=68 uM) and the insect sodium channel para/tipE (IC(50)=4.3 uM), without altering the activation or inactivation kinetics (depressant toxin). The protein is Mu-theraphotoxin-Hhn2b 1 of Cyriopagopus hainanus (Chinese bird spider).